We begin with the raw amino-acid sequence, 234 residues long: MKNMLLLSSSKYKNTGYLEHTLPWLQNFLADYRGKTIAFVPYAGVRRTFDEYEKTVQNALSYLEMNIVSVHHGKQHRDIIEQADVIAIGGGNTFCLLKQLYEHNLIDIIREKVNNSTPYFGWSAGANVVGASIMTTNDMPITYPPSFQALQLFPHQINPHFISGKMQGHNGESREERLAEFLLVNPTALVYALPEGSALHIQNEMATVLGENPILCFSENMECGTFDINTTFSY.

Active-site charge relay system residues include Ser123, Asp138, and His160.

This sequence belongs to the peptidase S51 family.

It is found in the cytoplasm. It carries out the reaction Dipeptidase E catalyzes the hydrolysis of dipeptides Asp-|-Xaa. It does not act on peptides with N-terminal Glu, Asn or Gln, nor does it cleave isoaspartyl peptides.. Its function is as follows. Hydrolyzes dipeptides containing N-terminal aspartate residues. May play a role in allowing the cell to use peptide aspartate to spare carbon otherwise required for the synthesis of the aspartate family of amino acids. In Haemophilus influenzae (strain PittGG), this protein is Peptidase E.